We begin with the raw amino-acid sequence, 130 residues long: Phosphoribosyl-AMP cyclohydrolase (130 aa).

Residue Asp-80 participates in Mg(2+) binding. Cys-81 contacts Zn(2+). Positions 82 and 84 each coordinate Mg(2+). Cys-98 and Cys-105 together coordinate Zn(2+).

This sequence belongs to the PRA-CH family. Homodimer. Requires Mg(2+) as cofactor. It depends on Zn(2+) as a cofactor.

It is found in the cytoplasm. The enzyme catalyses 1-(5-phospho-beta-D-ribosyl)-5'-AMP + H2O = 1-(5-phospho-beta-D-ribosyl)-5-[(5-phospho-beta-D-ribosylamino)methylideneamino]imidazole-4-carboxamide. The protein operates within amino-acid biosynthesis; L-histidine biosynthesis; L-histidine from 5-phospho-alpha-D-ribose 1-diphosphate: step 3/9. Its function is as follows. Catalyzes the hydrolysis of the adenine ring of phosphoribosyl-AMP. In Oleidesulfovibrio alaskensis (strain ATCC BAA-1058 / DSM 17464 / G20) (Desulfovibrio alaskensis), this protein is Phosphoribosyl-AMP cyclohydrolase.